Reading from the N-terminus, the 608-residue chain is Elongation factor 4 (608 aa).

Positions 11–193 constitute a tr-type G domain; it reads KKIRNFSIIA…QIVEKVPEPS (183 aa). GTP is bound by residues 23-28 and 140-143; these read DHGKST and NKID.

The protein belongs to the TRAFAC class translation factor GTPase superfamily. Classic translation factor GTPase family. LepA subfamily.

Its subcellular location is the cell membrane. The catalysed reaction is GTP + H2O = GDP + phosphate + H(+). Required for accurate and efficient protein synthesis under certain stress conditions. May act as a fidelity factor of the translation reaction, by catalyzing a one-codon backward translocation of tRNAs on improperly translocated ribosomes. Back-translocation proceeds from a post-translocation (POST) complex to a pre-translocation (PRE) complex, thus giving elongation factor G a second chance to translocate the tRNAs correctly. Binds to ribosomes in a GTP-dependent manner. This is Elongation factor 4 from Listeria innocua serovar 6a (strain ATCC BAA-680 / CLIP 11262).